Here is a 151-residue protein sequence, read N- to C-terminus: Ribosome maturation factor RimP (151 aa).

This sequence belongs to the RimP family.

Its subcellular location is the cytoplasm. Required for maturation of 30S ribosomal subunits. The protein is Ribosome maturation factor RimP of Photobacterium profundum (strain SS9).